A 295-amino-acid chain; its full sequence is Protein FAM221A (295 aa).

Over residues 272–283 (QERLLKEKEQKR) the composition is skewed to basic and acidic residues. The segment at 272–295 (QERLLKEKEQKRQKNSKPPTTNRP) is disordered.

The protein belongs to the FAM221 family.

The sequence is that of Protein FAM221A (fam221a) from Xenopus tropicalis (Western clawed frog).